A 180-amino-acid polypeptide reads, in one-letter code: Non-structural protein 4 (180 aa).

A run of 2 helical transmembrane segments spans residues 16-36 and 52-72; these read VCVH…VTVI and IVST…AILG.

The protein resides in the host membrane. The polypeptide is Non-structural protein 4 (Segment-11) (Banna virus (BAV)).